The primary structure comprises 676 residues: MDDEETAEIDETSSSSTNTNTNATAMATATETAAEMHVELEQDEEIPQGSENGAGTGAGDGTRAEAGASAIHAETTAHVSSRARLENMIEEVDNMFEEVSELMVDVTELMRRANQLREDAGTGAVPQNPTVATNTTPPAEIEEEEEGPEQQAEQALVNNDSPSQASISSRHSGSDMSLDSPGSEDDSDAEAVPRWMIPANRVRSAVDMLVSQARNRDGGIATLLRRENFLQRVRSMVFSQDRIRGRASDDANNADVINTVPDDTSEASPPPPLDVDMEEGVRFDTNLPAEHSYFGTNLNRVPGVDYLEVGSTHRMLIFMHQHILFPGEVLPFMIDGNIIDEEIEDTGRDGVIFGVGFPLMQPPDDNPHKLYGVTCQIYEKGESGRQHVFYKSRALQRIVINCDDIQGPPQYIARNPTMKCYSKVKILPEYFLPEPLKCIDMGSLNRFRDIPSMQEKFRRFQLTTTPWPVEACGEYSFEHIVEKARQKLEIHKIDTMPKCPIQLSFWLVRNLHLTEKMMRLTFLTDSVNIRLQIIGTTLKHESLFYCRYCNSSLAYCSDLFAMSKHGVQTQYCNSAGYIHETNTVYRVIAHAIGYSGEPSTEFSWFPGYQWHIIICKFCAQHVGWEFKAVEPNLAPKVFFGLAGSSVRIGKTSERTPTHGSRFVVRNLLRLVSRELE.

Residues 1–11 (MDDEETAEIDE) show a composition bias toward acidic residues. Disordered stretches follow at residues 1 to 78 (MDDE…TTAH), 118 to 194 (EDAG…AVPR), and 249 to 276 (DDAN…LDVD). Low complexity-rich tracts occupy residues 12 to 33 (TSSS…TETA) and 125 to 139 (VPQN…TPPA). Polar residues predominate over residues 156–177 (LVNNDSPSQASISSRHSGSDMS). The region spanning 314 to 542 (RMLIFMHQHI…IIGTTLKHES (229 aa)) is the Lon N-terminal domain. The region spanning 541–650 (ESLFYCRYCN…LAGSSVRIGK (110 aa)) is the CULT domain. 4 residues coordinate Zn(2+): Cys546, Cys549, Cys615, and Cys618.

Belongs to the CRBN family. As to quaternary structure, likely a component of a DCX (DDB1-CUL4-X-box) protein ligase complex. May interact with pic/DDB1. Post-translationally, ubiquitinated.

The protein resides in the nucleus. The protein operates within protein modification; protein ubiquitination. Functionally, substrate recognition component of a DCX (DDB1-CUL4-X-box) E3 protein ligase complex that mediates the ubiquitination and subsequent proteasomal degradation of target proteins. Has an essential role in mediating growth by negatively regulating insulin signaling. It also has a role in maintaining presynaptic function in the neuromuscular junction synapses of third-instar larvae. In Drosophila mojavensis (Fruit fly), this protein is Protein cereblon.